The following is a 132-amino-acid chain: Small ribosomal subunit protein uS8 (132 aa).

It belongs to the universal ribosomal protein uS8 family. In terms of assembly, part of the 30S ribosomal subunit. Contacts proteins S5 and S12.

Its function is as follows. One of the primary rRNA binding proteins, it binds directly to 16S rRNA central domain where it helps coordinate assembly of the platform of the 30S subunit. This chain is Small ribosomal subunit protein uS8, found in Rickettsia bellii (strain OSU 85-389).